We begin with the raw amino-acid sequence, 428 residues long: D-serine dehydratase (428 aa).

N6-(pyridoxal phosphate)lysine is present on K57. Pyridoxal 5'-phosphate is bound by residues Y203, Y210, T255, G286, and N287. The Zn(2+) site is built by H398 and C400.

It belongs to the DSD1 family. As to quaternary structure, homodimer. Pyridoxal 5'-phosphate serves as cofactor. The cofactor is Zn(2+).

It catalyses the reaction D-serine = pyruvate + NH4(+). Its activity is regulated as follows. Sodium cyanoborohydride, N-ethylmaleimide, hydroxylamine, phenyhydrazin and EDTA are inhibitors of the catalytic activity. In terms of biological role, catalyzes the conversion of D-serine to pyruvate and ammonia. May play a role in D-serine detoxification. The protein is D-serine dehydratase of Saccharomyces cerevisiae (strain ATCC 204508 / S288c) (Baker's yeast).